A 244-amino-acid chain; its full sequence is MKINISYPATGCQKLIEVDDERKLRPFYEKRMSHQMTAESLGDEWKGYLVRISGGNDKQGFPMKQGVLTNGRVRLLLGKGHSCYRPRRTGERKRKSVRGCIVDSNLSVLNLVILKKGEQDIPGLTDTTIPRRLGPKRAGRIRKLFNLNKEDDVRQYVVRRPLPQKEGKKQKFKTPKIQRLITPQRLQRKRHMRAVKRRRYAKQREEEATYAKLLAKRKKEEREAHAKRRSSARESSLRESKSKA.

Residues 185–244 are disordered; the sequence is RLQRKRHMRAVKRRRYAKQREEEATYAKLLAKRKKEEREAHAKRRSSARESSLRESKSKA. Over residues 186 to 201 the composition is skewed to basic residues; that stretch reads LQRKRHMRAVKRRRYA. Residues 231–244 are compositionally biased toward basic and acidic residues; sequence SARESSLRESKSKA.

It belongs to the eukaryotic ribosomal protein eS6 family. In terms of processing, ribosomal protein S6 is the major substrate of protein kinases in eukaryote ribosomes.

Component of the 40S small ribosomal subunit. Plays an important role in controlling cell growth and proliferation through the selective translation of particular classes of mRNA. The chain is Small ribosomal subunit protein eS6 (RPS6) from Branchiostoma floridae (Florida lancelet).